We begin with the raw amino-acid sequence, 890 residues long: Alanine--tRNA ligase (890 aa).

Zn(2+) contacts are provided by His568, His572, Cys680, and His684.

This sequence belongs to the class-II aminoacyl-tRNA synthetase family. It depends on Zn(2+) as a cofactor.

The protein resides in the cytoplasm. It catalyses the reaction tRNA(Ala) + L-alanine + ATP = L-alanyl-tRNA(Ala) + AMP + diphosphate. Its function is as follows. Catalyzes the attachment of alanine to tRNA(Ala) in a two-step reaction: alanine is first activated by ATP to form Ala-AMP and then transferred to the acceptor end of tRNA(Ala). Also edits incorrectly charged Ser-tRNA(Ala) and Gly-tRNA(Ala) via its editing domain. This chain is Alanine--tRNA ligase, found in Psychrobacter cryohalolentis (strain ATCC BAA-1226 / DSM 17306 / VKM B-2378 / K5).